Consider the following 520-residue polypeptide: Amine oxidase [flavin-containing] B (520 aa).

Residue serine 2 is modified to N-acetylserine. Residues 2–489 (SNKCDVVVVG…TFLERHLPSV (488 aa)) are Cytoplasmic-facing. Lysine 52 is modified (N6-acetyllysine). Cysteine 397 is subject to S-8alpha-FAD cysteine. Residues 490-516 (PGLLRLIGLTTIFSATALGFLAHKRGL) form a helical; Anchor for type IV membrane protein membrane-spanning segment. Residues 517-520 (LVRV) lie on the Mitochondrial intermembrane side of the membrane.

As to quaternary structure, monomer, homo- or heterodimer (containing two subunits of similar size). Each subunit contains a covalently bound flavin. Enzymatically active as monomer. FAD serves as cofactor.

It localises to the mitochondrion outer membrane. It carries out the reaction a secondary aliphatic amine + O2 + H2O = a primary amine + an aldehyde + H2O2. The enzyme catalyses (R)-adrenaline + O2 + H2O = (R)-3,4-dihydroxymandelaldehyde + methylamine + H2O2. It catalyses the reaction a primary methyl amine + O2 + H2O = an aldehyde + H2O2 + NH4(+). The catalysed reaction is benzylamine + O2 + H2O = benzaldehyde + H2O2 + NH4(+). It carries out the reaction dopamine + O2 + H2O = 3,4-dihydroxyphenylacetaldehyde + H2O2 + NH4(+). The enzyme catalyses tyramine + O2 + H2O = (4-hydroxyphenyl)acetaldehyde + H2O2 + NH4(+). It catalyses the reaction (R)-noradrenaline + O2 + H2O = (R)-3,4-dihydroxymandelaldehyde + H2O2 + NH4(+). The catalysed reaction is 2-phenylethylamine + O2 + H2O = 2-phenylacetaldehyde + H2O2 + NH4(+). It carries out the reaction N-acetylputrescine + O2 + H2O = 4-acetamidobutanal + H2O2 + NH4(+). With respect to regulation, inhibited by deprenyl. Functionally, catalyzes the oxidative deamination of primary and some secondary amines such as neurotransmitters, and exogenous amines including the tertiary amine, neurotoxin 1-methyl-4-phenyl-1,2,3,6-tetrahydropyridine (MPTP), with concomitant reduction of oxygen to hydrogen peroxide and participates in the metabolism of neuroactive and vasoactive amines in the central nervous system and peripheral tissues. Preferentially degrades benzylamine and phenylethylamine. This is Amine oxidase [flavin-containing] B from Homo sapiens (Human).